A 134-amino-acid chain; its full sequence is MARVKRGVTAHAKHKKVLDQAAGFRGRRKNTIRTAKAAVDRSKQYAYRDRKNRKRSFRALWIQRINAAVREQGLTYGRFIDGLAKAGIEIDRKVLSDIAIHEPDAFGALVASAKKALEYLKNTETPNAFEGAVR.

The protein belongs to the bacterial ribosomal protein bL20 family.

In terms of biological role, binds directly to 23S ribosomal RNA and is necessary for the in vitro assembly process of the 50S ribosomal subunit. It is not involved in the protein synthesizing functions of that subunit. The protein is Large ribosomal subunit protein bL20 of Brucella anthropi (strain ATCC 49188 / DSM 6882 / CCUG 24695 / JCM 21032 / LMG 3331 / NBRC 15819 / NCTC 12168 / Alc 37) (Ochrobactrum anthropi).